The sequence spans 168 residues: Peptidyl-prolyl cis-trans isomerase-like 3 (168 aa).

In terms of domain architecture, PPIase cyclophilin-type spans 1 to 156; it reads MSVTLHTNVG…SEIRMTGVTV (156 aa).

This sequence belongs to the cyclophilin-type PPIase family. PPIL3 subfamily.

The catalysed reaction is [protein]-peptidylproline (omega=180) = [protein]-peptidylproline (omega=0). In terms of biological role, PPIases accelerate the folding of proteins. It catalyzes the cis-trans isomerization of proline imidic peptide bonds in oligopeptides. This Mycosarcoma maydis (Corn smut fungus) protein is Peptidyl-prolyl cis-trans isomerase-like 3 (CYP10).